Here is a 62-residue protein sequence, read N- to C-terminus: Large ribosomal subunit protein eL37 (62 aa).

Residues cysteine 20, cysteine 23, cysteine 35, and cysteine 38 each contribute to the Zn(2+) site. The C4-type zinc finger occupies 20-38; it reads CRRCGRRSYHVRKKACSAC.

Belongs to the eukaryotic ribosomal protein eL37 family. It depends on Zn(2+) as a cofactor.

Binds to the 23S rRNA. This Methanococcus aeolicus (strain ATCC BAA-1280 / DSM 17508 / OCM 812 / Nankai-3) protein is Large ribosomal subunit protein eL37.